We begin with the raw amino-acid sequence, 441 residues long: Histidinol dehydrogenase (441 aa).

Residues Y136, Q197, and N220 each coordinate NAD(+). Substrate is bound by residues S243, Q265, and H268. Zn(2+) is bound by residues Q265 and H268. Active-site proton acceptor residues include E333 and H334. Substrate is bound by residues H334, D367, E421, and H426. D367 serves as a coordination point for Zn(2+). H426 serves as a coordination point for Zn(2+).

This sequence belongs to the histidinol dehydrogenase family. Zn(2+) is required as a cofactor.

The enzyme catalyses L-histidinol + 2 NAD(+) + H2O = L-histidine + 2 NADH + 3 H(+). The protein operates within amino-acid biosynthesis; L-histidine biosynthesis; L-histidine from 5-phospho-alpha-D-ribose 1-diphosphate: step 9/9. Catalyzes the sequential NAD-dependent oxidations of L-histidinol to L-histidinaldehyde and then to L-histidine. In Pseudomonas putida (strain ATCC 47054 / DSM 6125 / CFBP 8728 / NCIMB 11950 / KT2440), this protein is Histidinol dehydrogenase.